The following is a 371-amino-acid chain: Cytochrome b (371 aa).

4 helical membrane-spanning segments follow: residues 25 to 45 (FGSM…FLAI), 69 to 90 (WTMQ…YIHI), 105 to 125 (WLSG…GYVL), and 170 to 190 (FFAL…AHIM). Histidine 75 and histidine 89 together coordinate heme b. Heme b contacts are provided by histidine 174 and histidine 188. Histidine 193 lines the a ubiquinone pocket. The next 4 membrane-spanning stretches (helical) occupy residues 218-238 (NKDM…LSFL), 280-300 (LGGT…PFTH), 312-332 (MTQT…WTAT), and 339-358 (FMFI…FMNP).

Belongs to the cytochrome b family. As to quaternary structure, the cytochrome bc1 complex contains 3 respiratory subunits (MT-CYB, CYC1 and UQCRFS1), 2 core proteins (UQCRC1 and UQCRC2) and probably 6 low-molecular weight proteins. Heme b serves as cofactor.

It is found in the mitochondrion inner membrane. In terms of biological role, component of the ubiquinol-cytochrome c reductase complex (complex III or cytochrome b-c1 complex) that is part of the mitochondrial respiratory chain. The b-c1 complex mediates electron transfer from ubiquinol to cytochrome c. Contributes to the generation of a proton gradient across the mitochondrial membrane that is then used for ATP synthesis. The protein is Cytochrome b (MT-CYB) of Elapsoidea nigra (Usambara garter snake).